Consider the following 356-residue polypeptide: Butyrate kinase (356 aa).

Belongs to the acetokinase family.

The protein localises to the cytoplasm. The catalysed reaction is butanoate + ATP = butanoyl phosphate + ADP. Its pathway is lipid metabolism; butanoate metabolism. Catalyzes the conversion of butyryl-CoA through butyryl phosphate to butyrate. This Clostridium perfringens (strain ATCC 13124 / DSM 756 / JCM 1290 / NCIMB 6125 / NCTC 8237 / Type A) protein is Butyrate kinase (buk).